The following is a 581-amino-acid chain: Serine/threonine protein phosphatase 2A 55 kDa regulatory subunit B alpha isoform (581 aa).

The disordered stretch occupies residues methionine 1 to proline 27. Positions alanine 14 to glycine 25 are enriched in low complexity. WD repeat units lie at residues glutamine 47 to serine 86 and glutamate 123 to valine 164. Over residues arginine 172–glycine 189 the composition is skewed to low complexity. Residues arginine 172–proline 192 form a disordered region. WD repeat units follow at residues alanine 241–asparagine 279, aspartate 290–asparagine 330, glutamate 349–serine 387, and aspartate 492–isoleucine 530.

The protein belongs to the phosphatase 2A regulatory subunit B family. PP2A consists of a common heteromeric enzyme, composed of a catalytic subunit (subunits C), a constant regulatory subunit (subunit A), and a variety of regulatory subunits such as subunits B (the R2/B/PR55/B55, R3/B''/PR72/PR130/PR59 and R5/B'/B56 families).

Functionally, the B regulatory subunit may modulate substrate selectivity and catalytic activity, and may also direct the localization of the catalytic enzyme to a particular subcellular compartment. The chain is Serine/threonine protein phosphatase 2A 55 kDa regulatory subunit B alpha isoform from Oryza sativa subsp. japonica (Rice).